Consider the following 401-residue polypeptide: Exodeoxyribonuclease 7 large subunit (401 aa).

The protein belongs to the XseA family. In terms of assembly, heterooligomer composed of large and small subunits.

The protein resides in the cytoplasm. The catalysed reaction is Exonucleolytic cleavage in either 5'- to 3'- or 3'- to 5'-direction to yield nucleoside 5'-phosphates.. Bidirectionally degrades single-stranded DNA into large acid-insoluble oligonucleotides, which are then degraded further into small acid-soluble oligonucleotides. The sequence is that of Exodeoxyribonuclease 7 large subunit from Lachnoclostridium phytofermentans (strain ATCC 700394 / DSM 18823 / ISDg) (Clostridium phytofermentans).